A 415-amino-acid polypeptide reads, in one-letter code: Protein CDC73 homolog (415 aa).

It belongs to the CDC73 family. As to quaternary structure, component of the nuclear PAF1 complex (PAF1C), which consists of VIP2/ELF7/PAF1, VIP3/SKI8/WDR61, VIP4/LEO1, VIP5/RTF1, VIP6/ELF8/CTR9 and CDC73. Expressed in root tips, shoot apex, young leaves and flowers, especially in stamen filaments and carpels.

It localises to the nucleus. Its function is as follows. Component of the PAF1 complex (PAF1C) which is involved in histone modifications such as methylation on histone H3 'Lys-4' (H3K4me3). Involved in regulation of flowering time. Required for the expression of the flowering repressors FLC and MADS-box genes of the MAF family. Required for histone H3 trimethylation on 'Lys-4' (H3K4me3) at the FLC locus. Prevents trimethylation on 'Lys-27' (H3K27me3) at the same locus. The polypeptide is Protein CDC73 homolog (Arabidopsis thaliana (Mouse-ear cress)).